The chain runs to 187 residues: MPSEIAVEKKKLKNPPLQLHYLGDRVLRQPAKRITKVDDETRQLIRDMLQTMYSSDGIGLAAPQVGINKQLIVIDCEPDNPANPPLILINPTIKQVSREICSAQEGCLSIPGVYMDVKRPEVVEVAYKDENGRPQTLKATDLLGRCIQHEMDHLNGVVFVDRVDNSLTLAQELSKNGFSYQAVKPVA.

Positions 107 and 149 each coordinate Fe cation. The active site involves Glu-150. His-153 contacts Fe cation.

This sequence belongs to the polypeptide deformylase family. The cofactor is Fe(2+).

It carries out the reaction N-terminal N-formyl-L-methionyl-[peptide] + H2O = N-terminal L-methionyl-[peptide] + formate. In terms of biological role, removes the formyl group from the N-terminal Met of newly synthesized proteins. Requires at least a dipeptide for an efficient rate of reaction. N-terminal L-methionine is a prerequisite for activity but the enzyme has broad specificity at other positions. The sequence is that of Peptide deformylase 1 from Nostoc sp. (strain PCC 7120 / SAG 25.82 / UTEX 2576).